Reading from the N-terminus, the 326-residue chain is Transmembrane protein 171 (326 aa).

Transmembrane regions (helical) follow at residues 22 to 42 (IFFL…LSIF), 57 to 77 (MMLK…VILA), 114 to 134 (LIFG…GIWV), and 161 to 181 (FLSL…FFVV). Positions 229-326 (FPESSASAAA…LSPSSEPSPP (98 aa)) are disordered. Residues 230–240 (PESSASAAARS) show a composition bias toward low complexity. Polar residues predominate over residues 257–266 (SIFQSGSPTP). Low complexity-rich tracts occupy residues 288-302 (SSSE…LSEL) and 312-326 (ATTT…PSPP).

It is found in the membrane. This is Transmembrane protein 171 (TMEM171) from Bos taurus (Bovine).